Reading from the N-terminus, the 195-residue chain is Glutathione S-transferase class-mu 26 kDa isozyme (195 aa).

The region spanning M1–G83 is the GST N-terminal domain. Glutathione is bound by residues Y7–W8, W41–K45, N54–L55, and Q67–S68. The region spanning C85–K195 is the GST C-terminal domain. Substrate is bound at residue Y111.

It belongs to the GST superfamily. Mu family. Homodimer.

The enzyme catalyses RX + glutathione = an S-substituted glutathione + a halide anion + H(+). In terms of biological role, conjugation of reduced glutathione to a wide number of exogenous and endogenous hydrophobic electrophiles. GST isoenzymes appear to play a central role in the parasite detoxification system. Other functions are also suspected including a role in increasing the solubility of haematin in the parasite gut. This Schistosoma mansoni (Blood fluke) protein is Glutathione S-transferase class-mu 26 kDa isozyme.